A 267-amino-acid polypeptide reads, in one-letter code: Undecaprenyl-diphosphatase (267 aa).

8 consecutive transmembrane segments (helical) span residues 1–21 (MSYFEAFVLALIQGLTEFLPI), 39–59 (QGLAFDVAVHVGTLAAVVIYF), 83–103 (AKLAWMIVIATIPACIFGLVM), 111–131 (LRSAYVIATTTIIFGLLLWWV), 144–164 (AGWKKALFIGIAQALAMIPGT), 189–209 (FLMSIPIITLAGSYLGLKLVT), 218–238 (FLLTGIVTSFISAYLCIHLFL), and 246–266 (MTPFVIYRLILGVGLFAYLLM).

It belongs to the UppP family.

The protein localises to the cell inner membrane. The catalysed reaction is di-trans,octa-cis-undecaprenyl diphosphate + H2O = di-trans,octa-cis-undecaprenyl phosphate + phosphate + H(+). Catalyzes the dephosphorylation of undecaprenyl diphosphate (UPP). Confers resistance to bacitracin. This Vibrio vulnificus (strain CMCP6) protein is Undecaprenyl-diphosphatase.